The chain runs to 101 residues: opdI (101 aa).

Residues glycine 30–alanine 49 traverse the membrane as a helical segment. The disordered stretch occupies residues serine 56–glutamate 101. Polar residues-rich tracts occupy residues proline 66 to arginine 81 and asparagine 91 to glutamate 101.

It localises to the membrane. Part of the gene cluster that mediates the biosynthesis of oxopyrrolidines, polyketide-amino acid hybrid compounds with feature structures of tetramic acid. Does not seem to play a role in oxopyrrolidines A and B biosynthesis. In Penicillium oxalicum (strain 114-2 / CGMCC 5302) (Penicillium decumbens), this protein is opdI.